Here is a 475-residue protein sequence, read N- to C-terminus: Ribulose bisphosphate carboxylase large chain (475 aa).

Positions Met1–Ser2 are excised as a propeptide. N-acetylproline is present on Pro3. N6,N6,N6-trimethyllysine is present on Lys14. Substrate contacts are provided by Asn123 and Thr173. Catalysis depends on Lys175, which acts as the Proton acceptor. Substrate is bound at residue Lys177. Lys201, Asp203, and Glu204 together coordinate Mg(2+). An N6-carboxylysine modification is found at Lys201. The active-site Proton acceptor is the His294. 3 residues coordinate substrate: Arg295, His327, and Ser379.

This sequence belongs to the RuBisCO large chain family. Type I subfamily. As to quaternary structure, heterohexadecamer of 8 large chains and 8 small chains; disulfide-linked. The disulfide link is formed within the large subunit homodimers. It depends on Mg(2+) as a cofactor. The disulfide bond which can form in the large chain dimeric partners within the hexadecamer appears to be associated with oxidative stress and protein turnover.

It is found in the plastid. The protein localises to the chloroplast. The catalysed reaction is 2 (2R)-3-phosphoglycerate + 2 H(+) = D-ribulose 1,5-bisphosphate + CO2 + H2O. The enzyme catalyses D-ribulose 1,5-bisphosphate + O2 = 2-phosphoglycolate + (2R)-3-phosphoglycerate + 2 H(+). Functionally, ruBisCO catalyzes two reactions: the carboxylation of D-ribulose 1,5-bisphosphate, the primary event in carbon dioxide fixation, as well as the oxidative fragmentation of the pentose substrate in the photorespiration process. Both reactions occur simultaneously and in competition at the same active site. The polypeptide is Ribulose bisphosphate carboxylase large chain (Populus tremuloides (Quaking aspen)).